The chain runs to 334 residues: MKRISLTQYLIEEQRLHNNIPAELRLLLEVVARACKTISHAVGKGALGEVLGTAQSENVQGEVQKKLDIISNDILLEANEWGGHLAAMASEEMETIHQIPNRYPMGEYLLLFDPLDGSSNIDVNVSIGTIFSVLKAADGMQAPTEADFLQPGSKQVVAGYAVYGPQTVLVLTTGNGVQCFTLDREMGSWVMTQRDMQIPANTKEFAINASNARHWHPPVKRYVDEMLAGTTGPRAKDFNMRWIASMVADVHRILNRGGIFMYPADAREPDKPGKLRLMYEANPMAFIVEQAGGAATDGQQRILDIQPEKLHQRVPVFLGSKNEVELVTSYHKAK.

Glutamate 91, aspartate 113, leucine 115, and aspartate 116 together coordinate Mg(2+). Residues 116-119, asparagine 208, and lysine 274 each bind substrate; that span reads DGSS. Glutamate 280 contacts Mg(2+).

This sequence belongs to the FBPase class 1 family. Homotetramer. Mg(2+) is required as a cofactor.

Its subcellular location is the cytoplasm. The catalysed reaction is beta-D-fructose 1,6-bisphosphate + H2O = beta-D-fructose 6-phosphate + phosphate. Its pathway is carbohydrate biosynthesis; gluconeogenesis. The protein is Fructose-1,6-bisphosphatase class 1 of Janthinobacterium sp. (strain Marseille) (Minibacterium massiliensis).